The following is a 119-amino-acid chain: Urotensin-2B (119 aa).

An N-terminal signal peptide occupies residues 1-28 (MNKILSSTVCFGLLTLLSVLSFLQSVHG). Residues 29 to 109 (RPYLTQGNEI…VDGLFSSHPS (81 aa)) constitute a propeptide that is removed on maturation. Cys113 and Cys118 are disulfide-bonded.

It belongs to the urotensin-2 family.

It is found in the secreted. Its function is as follows. Potent vasoconstrictor. The chain is Urotensin-2B (UTS2B) from Homo sapiens (Human).